The primary structure comprises 299 residues: Putative activator of 90 kDa heat shock protein ATPase homolog 2 (299 aa).

The protein belongs to the AHA1 family.

Functionally, co-chaperone that stimulates HSP90 ATPase activity. This is Putative activator of 90 kDa heat shock protein ATPase homolog 2 from Homo sapiens (Human).